We begin with the raw amino-acid sequence, 338 residues long: Holliday junction branch migration complex subunit RuvB (338 aa).

Residues 4–184 are large ATPase domain (RuvB-L); that stretch reads ADRLMSAAAV…FGIVQRLEFY (181 aa). ATP-binding positions include Ile-23, Arg-24, Gly-65, Lys-68, Thr-69, Thr-70, 131 to 133, Arg-174, Tyr-184, and Arg-221; that span reads EDY. Position 69 (Thr-69) interacts with Mg(2+). Residues 185 to 255 form a small ATPAse domain (RuvB-S) region; it reads QTGDLQHIVS…VAVSALNMLN (71 aa). A head domain (RuvB-H) region spans residues 258 to 338; the sequence is TEGFDFMDRK…GLEEHGGDPE (81 aa). Residues Arg-294, Arg-313, and Arg-318 each coordinate DNA.

The protein belongs to the RuvB family. In terms of assembly, homohexamer. Forms an RuvA(8)-RuvB(12)-Holliday junction (HJ) complex. HJ DNA is sandwiched between 2 RuvA tetramers; dsDNA enters through RuvA and exits via RuvB. An RuvB hexamer assembles on each DNA strand where it exits the tetramer. Each RuvB hexamer is contacted by two RuvA subunits (via domain III) on 2 adjacent RuvB subunits; this complex drives branch migration. In the full resolvosome a probable DNA-RuvA(4)-RuvB(12)-RuvC(2) complex forms which resolves the HJ.

The protein resides in the cytoplasm. The enzyme catalyses ATP + H2O = ADP + phosphate + H(+). In terms of biological role, the RuvA-RuvB-RuvC complex processes Holliday junction (HJ) DNA during genetic recombination and DNA repair, while the RuvA-RuvB complex plays an important role in the rescue of blocked DNA replication forks via replication fork reversal (RFR). RuvA specifically binds to HJ cruciform DNA, conferring on it an open structure. The RuvB hexamer acts as an ATP-dependent pump, pulling dsDNA into and through the RuvAB complex. RuvB forms 2 homohexamers on either side of HJ DNA bound by 1 or 2 RuvA tetramers; 4 subunits per hexamer contact DNA at a time. Coordinated motions by a converter formed by DNA-disengaged RuvB subunits stimulates ATP hydrolysis and nucleotide exchange. Immobilization of the converter enables RuvB to convert the ATP-contained energy into a lever motion, pulling 2 nucleotides of DNA out of the RuvA tetramer per ATP hydrolyzed, thus driving DNA branch migration. The RuvB motors rotate together with the DNA substrate, which together with the progressing nucleotide cycle form the mechanistic basis for DNA recombination by continuous HJ branch migration. Branch migration allows RuvC to scan DNA until it finds its consensus sequence, where it cleaves and resolves cruciform DNA. The chain is Holliday junction branch migration complex subunit RuvB from Sodalis glossinidius (strain morsitans).